The following is a 391-amino-acid chain: Ectodysplasin-A (391 aa).

Basic and acidic residues predominate over residues 1–21; the sequence is MGYPEVERREPLPAAAPRERG. The segment at 1–28 is disordered; sequence MGYPEVERREPLPAAAPRERGSQGCGCR. Residues 1–41 lie on the Cytoplasmic side of the membrane; it reads MGYPEVERREPLPAAAPRERGSQGCGCRGAPARAGEGNSCR. Residues 42 to 62 form a helical; Signal-anchor for type II membrane protein membrane-spanning segment; the sequence is LFLGFFGLSLALHLLTLCCYL. At 63 to 391 the chain is on the extracellular side; it reads ELRSELRRER…AIRLGEAPAS (329 aa). 2 disordered regions span residues 73–130 and 145–245; these read GAES…SQDG and SYSE…GTRE. The segment covering 76-96 has biased composition (low complexity); the sequence is SRFSGPGTPGTSGTLSSPGGL. Residues 180-229 enclose the Collagen-like domain; that stretch reads GPPGPNGPPGPPGPPGPQGPPGIPGIPGIPGTTVMGPPGPPGPPGPQGPP. Composition is skewed to pro residues over residues 181-203 and 216-228; these read PPGPNGPPGPPGPPGPQGPPGIP and PPGPPGPPGPQGP. In terms of domain architecture, THD spans 249–385; the sequence is AVVHLQGQGS…HTTFFGAIRL (137 aa). Asn-313 is a glycosylation site (N-linked (GlcNAc...) asparagine). A disulfide bridge connects residues Cys-332 and Cys-346. N-linked (GlcNAc...) asparagine glycosylation occurs at Asn-372.

It belongs to the tumor necrosis factor family. In terms of assembly, homotrimer. The homotrimers may then dimerize and form higher-order oligomers. N-glycosylated. In terms of processing, processing by furin produces a secreted form.

Its subcellular location is the cell membrane. The protein resides in the secreted. Its function is as follows. Cytokine which is involved in epithelial-mesenchymal signaling during morphogenesis of ectodermal organs. Functions as a ligand activating the DEATH-domain containing receptors EDAR and EDA2R. Isoform A1 binds only to the receptor EDAR, while isoform A2 binds exclusively to the receptor EDA2R. May also play a role in cell adhesion. Isoform A1 binds only to the receptor EDAR, while isoform A2 binds exclusively to the receptor EDA2R. Functionally, isoform A2 binds exclusively to the receptor EDA2R. In Bos taurus (Bovine), this protein is Ectodysplasin-A (EDA).